The sequence spans 102 residues: MNNVFEIINQARRKNKLKRELQDNQKKIRDNQKRVVLLENMLDYIDPSMTTAEVITIVQNMKGDYEDRVDDHIIKSAEISKSRRDISRKIRDLTEADKKANK.

Residues 7 to 34 (IINQARRKNKLKRELQDNQKKIRDNQKR) adopt a coiled-coil conformation.

This sequence belongs to the pole-localizer TmaR family.

The protein resides in the cytoplasm. Pole-localizer protein involved in the regulation of several cellular processes. The polypeptide is Pole-localizer protein TmaR (Aliivibrio salmonicida (strain LFI1238) (Vibrio salmonicida (strain LFI1238))).